We begin with the raw amino-acid sequence, 321 residues long: Sialic acid-binding periplasmic protein SiaP (321 aa).

The signal sequence occupies residues 1 to 22; sequence MKTINKITIAILTLSAAASVNA.

The protein belongs to the bacterial solute-binding protein 7 family. In terms of assembly, the complex comprises the extracytoplasmic solute receptor protein SiaP, and the two transmembrane proteins SiaQ and SiaM.

The protein localises to the periplasm. In terms of biological role, part of the tripartite ATP-independent periplasmic (TRAP) transport system SiaPQM that catalyzes unidirectional Na(+)-dependent sialic acid uptake. Binds the common sialic acid N-acetylneuraminic acid (Neu5Ac) with a high affinity. The protein is Sialic acid-binding periplasmic protein SiaP of Vibrio cholerae serotype O1 (strain ATCC 39315 / El Tor Inaba N16961).